A 168-amino-acid chain; its full sequence is Thiol peroxidase (168 aa).

The 149-residue stretch at 20-168 (PAVGSQLPAF…DYDKALAALA (149 aa)) folds into the Thioredoxin domain. The active-site Cysteine sulfenic acid (-SOH) intermediate is the C62. Cysteines 62 and 96 form a disulfide.

It belongs to the peroxiredoxin family. Tpx subfamily. As to quaternary structure, homodimer.

It catalyses the reaction a hydroperoxide + [thioredoxin]-dithiol = an alcohol + [thioredoxin]-disulfide + H2O. In terms of biological role, thiol-specific peroxidase that catalyzes the reduction of hydrogen peroxide and organic hydroperoxides to water and alcohols, respectively. Plays a role in cell protection against oxidative stress by detoxifying peroxides. This chain is Thiol peroxidase, found in Chlorobaculum tepidum (strain ATCC 49652 / DSM 12025 / NBRC 103806 / TLS) (Chlorobium tepidum).